Consider the following 384-residue polypeptide: 1-deoxy-D-xylulose 5-phosphate reductoisomerase (384 aa).

6 residues coordinate NADPH: threonine 10, glycine 11, serine 12, isoleucine 13, lysine 37, and asparagine 124. A 1-deoxy-D-xylulose 5-phosphate-binding site is contributed by lysine 125. Glutamate 126 contacts NADPH. Residue aspartate 150 participates in Mn(2+) binding. Residues serine 151, glutamate 152, serine 176, and histidine 199 each contribute to the 1-deoxy-D-xylulose 5-phosphate site. Glutamate 152 contributes to the Mn(2+) binding site. NADPH is bound at residue glycine 205. Serine 212, asparagine 217, lysine 218, and glutamate 221 together coordinate 1-deoxy-D-xylulose 5-phosphate. Glutamate 221 provides a ligand contact to Mn(2+).

Belongs to the DXR family. It depends on Mg(2+) as a cofactor. Mn(2+) serves as cofactor.

The enzyme catalyses 2-C-methyl-D-erythritol 4-phosphate + NADP(+) = 1-deoxy-D-xylulose 5-phosphate + NADPH + H(+). Its pathway is isoprenoid biosynthesis; isopentenyl diphosphate biosynthesis via DXP pathway; isopentenyl diphosphate from 1-deoxy-D-xylulose 5-phosphate: step 1/6. Catalyzes the NADPH-dependent rearrangement and reduction of 1-deoxy-D-xylulose-5-phosphate (DXP) to 2-C-methyl-D-erythritol 4-phosphate (MEP). The polypeptide is 1-deoxy-D-xylulose 5-phosphate reductoisomerase (Clostridium tetani (strain Massachusetts / E88)).